We begin with the raw amino-acid sequence, 1270 residues long: Nuclear exosome regulator NRDE2 (1270 aa).

Disordered stretches follow at residues 1–22 and 119–209; these read MFRA…ENPD and SVKS…HTLM. Positions 119 to 135 are enriched in polar residues; that stretch reads SVKSLNGCQDPPETSQQ. Basic residues predominate over residues 164-184; the sequence is QRSRSREKKRRKKERRRKRSS. The span at 192-204 shows a compositional bias: basic and acidic residues; that stretch reads RSRDRSSRARDTS.

It belongs to the NRDE2 family. Interacts with nrde-3.

The protein resides in the nucleus. It is found in the nucleus speckle. The protein localises to the nucleolus. Protein of the nuclear speckles that regulates RNA exosomal degradation. Involved in short interfering RNAs-mediated silencing in nuclei. Functions with nrde-3 in the nuclear RNA-mediated gene silencing (RNAi) pathway to regulate gene expression via inhibition of RNA polymerases I and II during the elongation phase of transcription. Required for exogenous RNAi-induced H3K27 methylation. The polypeptide is Nuclear exosome regulator NRDE2 (nrde-2) (Caenorhabditis elegans).